The sequence spans 206 residues: Large ribosomal subunit protein uL4 (206 aa).

Positions 66-77 (QKGTGRARHHSA) are enriched in basic residues. The tract at residues 66–96 (QKGTGRARHHSARAPQFRGGGQAHGPVVRSH) is disordered.

The protein belongs to the universal ribosomal protein uL4 family. In terms of assembly, part of the 50S ribosomal subunit.

One of the primary rRNA binding proteins, this protein initially binds near the 5'-end of the 23S rRNA. It is important during the early stages of 50S assembly. It makes multiple contacts with different domains of the 23S rRNA in the assembled 50S subunit and ribosome. In terms of biological role, forms part of the polypeptide exit tunnel. This is Large ribosomal subunit protein uL4 from Brucella anthropi (strain ATCC 49188 / DSM 6882 / CCUG 24695 / JCM 21032 / LMG 3331 / NBRC 15819 / NCTC 12168 / Alc 37) (Ochrobactrum anthropi).